A 192-amino-acid polypeptide reads, in one-letter code: Small ribosomal subunit protein bS16 (192 aa).

The disordered stretch occupies residues 153–192 (AEAKAKAEAEAAAAAEEAAETEETPVEAAAEEAPAAESAE). The span at 178–192 (VEAAAEEAPAAESAE) shows a compositional bias: low complexity.

This sequence belongs to the bacterial ribosomal protein bS16 family.

The sequence is that of Small ribosomal subunit protein bS16 from Porphyromonas gingivalis (strain ATCC BAA-308 / W83).